Here is a 387-residue protein sequence, read N- to C-terminus: Protein SGT1 homolog (387 aa).

TPR repeat units lie at residues 1–34, 36–67, and 68–101; these read MEQL…SNNA, AFFK…DSNN, and SKYY…DSEN. Disordered stretches follow at residues 110-193 and 299-323; these read KSKA…PSSG and SPAV…EEKL. Low complexity predominate over residues 118-127; that stretch reads NPTTTTTTTP. Residues 128-138 are compositionally biased toward pro residues; it reads TPTPTPTPAPQ. A compositionally biased stretch (low complexity) spans 139–185; the sequence is PVTTTTNPTPIPTTSNTTTTTNNNNNNNNNNNNNNNNNNTTTDSTTT. A CS domain is found at 193–282; sequence GNKVRHEWYQ…SRAIKWDTLE (90 aa). An SGS domain is found at 301–387; it reads AVPSPYASKK…KGLEFKQYEK (87 aa). Positions 308-323 are enriched in basic and acidic residues; it reads SKKDWDKLPNEPEEKL.

Belongs to the SGT1 family.

Its function is as follows. May play a role in ubiquitination and subsequent proteasomal degradation of target proteins. The sequence is that of Protein SGT1 homolog (sugt1) from Dictyostelium discoideum (Social amoeba).